Consider the following 309-residue polypeptide: tRNA uridine(34) hydroxylase (309 aa).

A Rhodanese domain is found at 123-217 (DDPEVIVVDT…YLEEVPEEQT (95 aa)). Catalysis depends on Cys177, which acts as the Cysteine persulfide intermediate.

This sequence belongs to the TrhO family.

The catalysed reaction is uridine(34) in tRNA + AH2 + O2 = 5-hydroxyuridine(34) in tRNA + A + H2O. Functionally, catalyzes oxygen-dependent 5-hydroxyuridine (ho5U) modification at position 34 in tRNAs. The polypeptide is tRNA uridine(34) hydroxylase (Saccharophagus degradans (strain 2-40 / ATCC 43961 / DSM 17024)).